We begin with the raw amino-acid sequence, 437 residues long: Enolase 2 (437 aa).

Positions 160 and 169 each coordinate substrate. Glutamate 212 functions as the Proton donor in the catalytic mechanism. Positions 247, 296, and 321 each coordinate Mg(2+). Substrate is bound by residues glutamate 296 and aspartate 321. The active-site Proton acceptor is lysine 346. Residues 373-376 (SHRS) and lysine 397 contribute to the substrate site.

It belongs to the enolase family. In terms of assembly, homodimer. Requires Mg(2+) as cofactor.

Its subcellular location is the cytoplasm. It carries out the reaction (2R)-2-phosphoglycerate = phosphoenolpyruvate + H2O. Its pathway is carbohydrate degradation; glycolysis; pyruvate from D-glyceraldehyde 3-phosphate: step 4/5. This Candida glabrata (strain ATCC 2001 / BCRC 20586 / JCM 3761 / NBRC 0622 / NRRL Y-65 / CBS 138) (Yeast) protein is Enolase 2 (ENO2).